We begin with the raw amino-acid sequence, 147 residues long: Hemoglobin subunit beta (147 aa).

Residues 2–147 (HWEDAEKQYI…ISHSLGREYH (146 aa)) enclose the Globin domain. Heme b-binding residues include His63 and His92.

The protein belongs to the globin family. In terms of assembly, heterotetramer of two alpha chains and two beta chains. As to expression, red blood cells.

Functionally, involved in oxygen transport from the lung to the various peripheral tissues. In Lepidosiren paradoxus (South American lungfish), this protein is Hemoglobin subunit beta (HBB).